An 89-amino-acid chain; its full sequence is Small ribosomal subunit protein uS15 (89 aa).

The protein belongs to the universal ribosomal protein uS15 family. Part of the 30S ribosomal subunit. Forms a bridge to the 50S subunit in the 70S ribosome, contacting the 23S rRNA.

Functionally, one of the primary rRNA binding proteins, it binds directly to 16S rRNA where it helps nucleate assembly of the platform of the 30S subunit by binding and bridging several RNA helices of the 16S rRNA. Its function is as follows. Forms an intersubunit bridge (bridge B4) with the 23S rRNA of the 50S subunit in the ribosome. The chain is Small ribosomal subunit protein uS15 from Lactiplantibacillus plantarum (strain ATCC BAA-793 / NCIMB 8826 / WCFS1) (Lactobacillus plantarum).